The sequence spans 117 residues: Large ribosomal subunit protein uL18 (117 aa).

This sequence belongs to the universal ribosomal protein uL18 family. As to quaternary structure, part of the 50S ribosomal subunit; part of the 5S rRNA/L5/L18/L25 subcomplex. Contacts the 5S and 23S rRNAs.

Its function is as follows. This is one of the proteins that bind and probably mediate the attachment of the 5S RNA into the large ribosomal subunit, where it forms part of the central protuberance. The protein is Large ribosomal subunit protein uL18 of Sphingopyxis alaskensis (strain DSM 13593 / LMG 18877 / RB2256) (Sphingomonas alaskensis).